A 248-amino-acid polypeptide reads, in one-letter code: MFDSKVAIVTGAAQGIGQAYAQALAREGASVVVADINADGAAAVAKQIVADGGTAIHVPVDVSDEDSAKAMVDRAVGAFGGIDYLVNNAAIYGGMKLDLLLTVPLDYYKKFMSVNHDGVLVCTRAVYKHMAKRGGGAIVNQSSTAAWLYSNFYGLAKVGVNGLTQQLARELGGMKIRINAIAPGPIDTEATRTVTPAELVKNMVQTIPLSRMGTPEDLVGMCLFLLSDSASWITGQIFNVDGGQIIRS.

8–32 (IVTGAAQGIGQAYAQALAREGASVV) is a binding site for NADP(+). Residue Ser-143 coordinates substrate. Catalysis depends on Tyr-153, which acts as the Proton acceptor.

Belongs to the short-chain dehydrogenases/reductases (SDR) family.

This is an uncharacterized protein from Mycobacterium tuberculosis (strain CDC 1551 / Oshkosh).